Here is a 95-residue protein sequence, read N- to C-terminus: Small ribosomal subunit protein uS17 (95 aa).

The protein belongs to the universal ribosomal protein uS17 family. In terms of assembly, part of the 30S ribosomal subunit.

In terms of biological role, one of the primary rRNA binding proteins, it binds specifically to the 5'-end of 16S ribosomal RNA. This chain is Small ribosomal subunit protein uS17, found in Phytoplasma australiense.